The following is a 198-amino-acid chain: Protein C4 (198 aa).

Positions Met-1–Cys-36 are disordered.

The protein is Protein C4 (C4) of Giardia intestinalis (Giardia lamblia).